We begin with the raw amino-acid sequence, 185 residues long: Large ribosomal subunit protein uL5 (185 aa).

It belongs to the universal ribosomal protein uL5 family. As to quaternary structure, part of the 50S ribosomal subunit; part of the 5S rRNA/L5/L18/L25 subcomplex. Contacts the 5S rRNA and the P site tRNA. Forms a bridge to the 30S subunit in the 70S ribosome.

This is one of the proteins that bind and probably mediate the attachment of the 5S RNA into the large ribosomal subunit, where it forms part of the central protuberance. In the 70S ribosome it contacts protein S13 of the 30S subunit (bridge B1b), connecting the 2 subunits; this bridge is implicated in subunit movement. Contacts the P site tRNA; the 5S rRNA and some of its associated proteins might help stabilize positioning of ribosome-bound tRNAs. This is Large ribosomal subunit protein uL5 from Phocaeicola vulgatus (strain ATCC 8482 / DSM 1447 / JCM 5826 / CCUG 4940 / NBRC 14291 / NCTC 11154) (Bacteroides vulgatus).